The following is a 776-amino-acid chain: Conserved oligomeric Golgi complex subunit 4 (776 aa).

2 positions are modified to phosphoserine: serine 342 and serine 345.

This sequence belongs to the COG4 family. In terms of assembly, component of the conserved oligomeric Golgi complex which is composed of eight different subunits and is required for normal Golgi morphology and localization.

It is found in the golgi apparatus membrane. Its function is as follows. Required for normal Golgi function. In Drosophila melanogaster (Fruit fly), this protein is Conserved oligomeric Golgi complex subunit 4.